Consider the following 190-residue polypeptide: Surfactant protein C (190 aa).

Positions 1 to 23 are excised as a propeptide; sequence MDVGSKEVLIENPPDYSAAPQGR. A lipid anchor (S-palmitoyl cysteine) is attached at Cys28. A propeptide spanning residues 59 to 190 is cleaved from the precursor; sequence HMSQKHTEMV…LCGEVPLYYI (132 aa). One can recognise a BRICHOS domain in the interval 94 to 190; sequence FSIGSTGIVV…LCGEVPLYYI (97 aa). Residues Cys121 and Cys182 are joined by a disulfide bond.

It is found in the secreted. Its subcellular location is the extracellular space. The protein resides in the surface film. Functionally, pulmonary surfactant associated proteins promote alveolar stability by lowering the surface tension at the air-liquid interface in the peripheral air spaces. The polypeptide is Surfactant protein C (SFTPC) (Neovison vison (American mink)).